The sequence spans 177 residues: Large ribosomal subunit protein uL6 (177 aa).

Belongs to the universal ribosomal protein uL6 family. In terms of assembly, part of the 50S ribosomal subunit.

Its function is as follows. This protein binds to the 23S rRNA, and is important in its secondary structure. It is located near the subunit interface in the base of the L7/L12 stalk, and near the tRNA binding site of the peptidyltransferase center. This is Large ribosomal subunit protein uL6 from Teredinibacter turnerae (strain ATCC 39867 / T7901).